Reading from the N-terminus, the 179-residue chain is GTP-dependent dephospho-CoA kinase (179 aa).

Positions 49, 50, 51, 68, 70, and 126 each coordinate GTP.

The protein belongs to the GTP-dependent DPCK family.

It carries out the reaction 3'-dephospho-CoA + GTP = GDP + CoA + H(+). It functions in the pathway cofactor biosynthesis; coenzyme A biosynthesis. In terms of biological role, catalyzes the GTP-dependent phosphorylation of the 3'-hydroxyl group of dephosphocoenzyme A to form coenzyme A (CoA). The protein is GTP-dependent dephospho-CoA kinase of Pyrococcus abyssi (strain GE5 / Orsay).